The primary structure comprises 56 residues: UPF0434 protein Sden_2197 (56 aa).

It belongs to the UPF0434 family.

This is UPF0434 protein Sden_2197 from Shewanella denitrificans (strain OS217 / ATCC BAA-1090 / DSM 15013).